Reading from the N-terminus, the 251-residue chain is Small ribosomal subunit protein uS2 (251 aa).

This sequence belongs to the universal ribosomal protein uS2 family.

This chain is Small ribosomal subunit protein uS2, found in Novosphingobium aromaticivorans (strain ATCC 700278 / DSM 12444 / CCUG 56034 / CIP 105152 / NBRC 16084 / F199).